A 62-amino-acid polypeptide reads, in one-letter code: Large ribosomal subunit protein bL28 (62 aa).

Belongs to the bacterial ribosomal protein bL28 family.

This chain is Large ribosomal subunit protein bL28, found in Koribacter versatilis (strain Ellin345).